Here is a 932-residue protein sequence, read N- to C-terminus: Chaperone protein ClpC3, chloroplastic (932 aa).

Residues 1–20 (MERTLLNPPPSLRSPACRTT) are disordered. The transit peptide at 1–48 (MERTLLNPPPSLRSPACRTTTATRIRPSSSMATMIPTPPPMRHARLVK) directs the protein to the chloroplast. Residues 99–240 (FDMFTDKAIK…RSEVIRMISD (142 aa)) enclose the Clp R domain. 2 repeat regions span residues 102 to 167 (FTDK…AGRG) and 177 to 240 (FTPA…MISD). Positions 264–511 (LLEYGTNLTK…LVRLRNAQLP (248 aa)) are i. An ATP-binding site is contributed by 309 to 316 (GEPGVGKT). Residues 518–553 (EKKLKKIMAEKSEAIRSQDFEKAGALRGEEVELKSE) enclose the UVR domain. Residues 579 to 770 (VTEADVQHIV…LIIMTSNVGS (192 aa)) are II. Residue 653–660 (GPTGVGKS) participates in ATP binding.

The protein belongs to the ClpA/ClpB family. ClpC subfamily.

It localises to the plastid. It is found in the chloroplast. Its function is as follows. Molecular chaperone that may interact with a ClpP-like protease involved in degradation of denatured proteins in the chloroplast. In Oryza sativa subsp. japonica (Rice), this protein is Chaperone protein ClpC3, chloroplastic (CLPC3).